Reading from the N-terminus, the 303-residue chain is ATP phosphoribosyltransferase (303 aa).

The protein belongs to the ATP phosphoribosyltransferase family. Long subfamily. Mg(2+) serves as cofactor.

The protein resides in the cytoplasm. It carries out the reaction 1-(5-phospho-beta-D-ribosyl)-ATP + diphosphate = 5-phospho-alpha-D-ribose 1-diphosphate + ATP. It functions in the pathway amino-acid biosynthesis; L-histidine biosynthesis; L-histidine from 5-phospho-alpha-D-ribose 1-diphosphate: step 1/9. Feedback inhibited by histidine. Functionally, catalyzes the condensation of ATP and 5-phosphoribose 1-diphosphate to form N'-(5'-phosphoribosyl)-ATP (PR-ATP). Has a crucial role in the pathway because the rate of histidine biosynthesis seems to be controlled primarily by regulation of HisG enzymatic activity. In Haemophilus influenzae (strain PittGG), this protein is ATP phosphoribosyltransferase.